An 822-amino-acid chain; its full sequence is Serine/threonine-protein phosphatase 4 regulatory subunit 3 (822 aa).

One can recognise a WH1 domain in the interval 1 to 100 (MTDTRRRVKV…DEIWEKICQV (100 aa)). Positions 744 to 822 (TSQLSASGHP…PLTKKARLGS (79 aa)) are disordered. A compositionally biased stretch (low complexity) spans 761 to 774 (SPGSPESPGSVSKS). Positions 793–808 (YPDDDEEDDDNDEEEK) are enriched in acidic residues.

This sequence belongs to the SMEK family. In terms of assembly, serine/threonine-protein phosphatase 4 (PP4) occurs in different assemblies of the catalytic and one or more regulatory subunits.

Regulatory subunit of serine/threonine-protein phosphatase 4. This chain is Serine/threonine-protein phosphatase 4 regulatory subunit 3 (smek1), found in Xenopus laevis (African clawed frog).